Reading from the N-terminus, the 206-residue chain is Cytidylate kinase (206 aa).

9-17 (GPAAAGKGT) provides a ligand contact to ATP. Residues 155–168 (LRERDRRDREREAA) show a composition bias toward basic and acidic residues. The segment at 155-174 (LRERDRRDREREAAPLRPAP) is disordered.

It belongs to the cytidylate kinase family. Type 1 subfamily.

It is found in the cytoplasm. The catalysed reaction is CMP + ATP = CDP + ADP. The enzyme catalyses dCMP + ATP = dCDP + ADP. This chain is Cytidylate kinase, found in Cereibacter sphaeroides (strain KD131 / KCTC 12085) (Rhodobacter sphaeroides).